The primary structure comprises 351 residues: Trace amine-associated receptor 2 (351 aa).

At 1-48 the chain is on the extracellular side; it reads MAVSSEQHELSHFKRTQTKKEKFNCSEYGNRSCPENERSLGVRVAMYS. N-linked (GlcNAc...) asparagine glycans are attached at residues asparagine 24 and asparagine 30. 2 cysteine pairs are disulfide-bonded: cysteine 33–cysteine 197 and cysteine 116–cysteine 201. The helical transmembrane segment at 49 to 69 threads the bilayer; it reads FMAGSIFITIFGNLAMIISIS. Residues 70 to 79 are Cytoplasmic-facing; that stretch reads YFKQLHTPTN. A helical membrane pass occupies residues 80 to 100; the sequence is FLILSMAITDFLLGFTIMPYS. The Extracellular segment spans residues 101–118; that stretch reads MIRSVENCWYFGLTFCKI. A helical membrane pass occupies residues 119-139; the sequence is YYSFDLMLSITSIFHLCSVAI. The Cytoplasmic portion of the chain corresponds to 140 to 162; the sequence is DRFYAICYPLLYSTKITIPVIKR. A helical membrane pass occupies residues 163-183; it reads LLLLCWSVPGAFAFGVVFSEA. Residues 184–207 are Extracellular-facing; sequence YADGIEGYDILVACSSSCPVMFNK. The helical transmembrane segment at 208–228 threads the bilayer; it reads LWGTTLFMAGFFTPGSMMVGI. The Cytoplasmic portion of the chain corresponds to 229 to 263; that stretch reads YGKIFAVSRKHAHAINNLRENQNNQVKKDKKAAKT. Residues 264-284 traverse the membrane as a helical segment; it reads LGIVIGVFLLCWFPCFFTILL. Topologically, residues 285–299 are extracellular; the sequence is DPFLNFSTPVVLFDA. Asparagine 289 carries N-linked (GlcNAc...) asparagine glycosylation. A helical transmembrane segment spans residues 300 to 322; sequence LTWFGYFNSTCNPLIYGFFYPWF. At 323-351 the chain is on the cytoplasmic side; it reads RRALKYILLGKIFSSCFHNTILCMQKESE.

Belongs to the G-protein coupled receptor 1 family. In terms of tissue distribution, not expressed in the pons, thalamus, hypothalamus, hippocampus, caudate, putamen, frontal cortex, basal forebrain, midbrain or liver.

The protein resides in the cell membrane. Its function is as follows. Orphan olfactory receptor specific for trace amines. Trace amine compounds are enriched in animal body fluids and act on trace amine-associated receptors (TAARs) to elicit both intraspecific and interspecific innate behaviors. Ligand-binding causes a conformation change that triggers signaling via the G(s)-class of G-proteins which activate adenylate cyclase. The protein is Trace amine-associated receptor 2 of Homo sapiens (Human).